The chain runs to 337 residues: Inositol 2-dehydrogenase (337 aa).

It belongs to the Gfo/Idh/MocA family. Homotetramer.

It catalyses the reaction myo-inositol + NAD(+) = scyllo-inosose + NADH + H(+). In terms of biological role, involved in the oxidation of myo-inositol (MI) to 2-keto-myo-inositol (2KMI or 2-inosose). This Serratia proteamaculans (strain 568) protein is Inositol 2-dehydrogenase.